The chain runs to 476 residues: MAPAGLSLGAAILCLLAWAGLAAGDRVYVHPFHLLVYSKSNCDQLEKPSVETPPDPTFTPVPIQTKSSAVDEEALWEQLVRATEKLEAEDRLRASEVGLLLNFMGFHMYKTLSETWSVASGAVFSPVALFSTLTSFYVGALDPTASRLQAFLGVPGEGQGCTSRLDGHKVLSSLQTIQGLLVAQGGASSQARLLLSTVVGLFTAPGLHLKQPFVQSLSSFAPITLPRSLDLSTDPNLAAEKINRFMQSVTGWNMGRALTAVSPDSTLLFNAYVHFQGKMKGFSLLPGLKEFWVDNTTSVSVPMLSGTGIFHFWSDSQNNLSVTRVPLSANTYLLLIQPHHTPDLRKVEALTFQHNFLTRMKNLSPRAIHLTMPQLTLKASYDLQDLLAQAKLPTLLGAEANLSKISDANLRVGKVLNSVLFELKADGEQAPESVPQPAGPEALEVTLNSPFLLAVLERSSGALHFLGRVSRPLSAE.

An N-terminal signal peptide occupies residues Met-1–Gly-24. A disulfide bridge links Cys-42 with Cys-161. Residues Asn-295, Asn-319, Asn-362, and Asn-401 are each glycosylated (N-linked (GlcNAc...) asparagine).

This sequence belongs to the serpin family. In terms of processing, in response to low blood pressure, the enzyme renin/REN cleaves angiotensinogen to produce angiotensin-1. Angiotensin-1 is a substrate of ACE (angiotensin converting enzyme) that removes a dipeptide to yield the physiologically active peptide angiotensin-2. Angiotensin-1 and angiotensin-2 can be further processed to generate angiotensin-3, angiotensin-4. Angiotensin 1-9 is cleaved from angiotensin-1 by ACE2 and can be further processed by ACE to produce angiotensin 1-7, angiotensin 1-5 and angiotensin 1-4. Angiotensin 1-7 has also been proposed to be cleaved from angiotensin-2 by ACE2 or from angiotensin-1 by MME (neprilysin). Post-translationally, the disulfide bond is labile. Angiotensinogen is present in the circulation in a near 40:60 ratio with the oxidized disulfide-bonded form, which preferentially interacts with receptor-bound renin.

Its subcellular location is the secreted. Essential component of the renin-angiotensin system (RAS), a potent regulator of blood pressure, body fluid and electrolyte homeostasis. Its function is as follows. Acts directly on vascular smooth muscle as a potent vasoconstrictor, affects cardiac contractility and heart rate through its action on the sympathetic nervous system, and alters renal sodium and water absorption through its ability to stimulate the zona glomerulosa cells of the adrenal cortex to synthesize and secrete aldosterone. Acts by binding to angiotensin receptors AGTR1 and AGTR2. Also binds the DEAR/FBXW7-AS1 receptor. Functionally, stimulates aldosterone release. In terms of biological role, is a ligand for the G-protein coupled receptor MAS1. Has vasodilator and antidiuretic effects. Has an antithrombotic effect that involves MAS1-mediated release of nitric oxide from platelets. The chain is Angiotensinogen (AGT) from Bos taurus (Bovine).